A 231-amino-acid chain; its full sequence is Ureidoacrylate amidohydrolase RutB (231 aa).

The active-site Proton acceptor is Asp-25. The active site involves Lys-134. Cys-167 (nucleophile) is an active-site residue.

This sequence belongs to the isochorismatase family. RutB subfamily.

It carries out the reaction (Z)-3-ureidoacrylate + H2O + H(+) = (Z)-3-aminoacrylate + NH4(+) + CO2. It catalyses the reaction (Z)-3-ureidoacrylate + H2O = (Z)-3-aminoacrylate + carbamate + H(+). The enzyme catalyses (Z)-2-methylureidoacrylate + H2O + H(+) = (Z)-2-methylaminoacrylate + NH4(+) + CO2. In terms of biological role, hydrolyzes ureidoacrylate to form aminoacrylate and carbamate. The carbamate hydrolyzes spontaneously, thereby releasing one of the nitrogen atoms of the pyrimidine ring as ammonia and one of its carbon atoms as CO2. This is Ureidoacrylate amidohydrolase RutB from Escherichia coli O9:H4 (strain HS).